The following is a 310-amino-acid chain: Regulator of microtubule dynamics protein 1 (310 aa).

Lysine 165 carries the N6-succinyllysine modification. TPR repeat units follow at residues 168-204 and 222-258; these read AICISDVGDYEGIKVKIANAYVIKEHFEKAIELNPKD and PWYQRRIAEVLFANPPSSTYEEALKYFHRAEEVDPNF.

This sequence belongs to the RMDN family. In terms of assembly, interacts with microtubules.

It localises to the cytoplasm. Its subcellular location is the cytoskeleton. The protein localises to the spindle. It is found in the spindle pole. This is Regulator of microtubule dynamics protein 1 (Rmdn1) from Rattus norvegicus (Rat).